A 234-amino-acid polypeptide reads, in one-letter code: Sperm flagellar protein 1 (234 aa).

The 106-residue stretch at glutamate 7–glutamate 112 folds into the Calponin-homology (CH) domain. Residues valine 181 to arginine 234 form an essential for homodimerization and microtubule bundling activity region.

In terms of assembly, homodimer. Interacts with actin, TJP1, CGN and CDH1. In terms of tissue distribution, expressed predominantly in the seminiferous epithelium of adult testis. Expressed in pillar cells of the organ of Corti (at protein level). Expressed in brain, kidney, lung and testis. Highly expressed in the trachea, lung and oviduct.

It localises to the cytoplasm. Its subcellular location is the cell projection. It is found in the cilium. The protein resides in the flagellum. The protein localises to the cytoskeleton. It localises to the cilium axoneme. Its subcellular location is the apical cell membrane. It is found in the basolateral cell membrane. The protein resides in the stress fiber. The protein localises to the microvillus. It localises to the lamellipodium. Its subcellular location is the filopodium. Functionally, microtubule-associated protein that promotes microtubule bundling and stabilizes microtubules against depolymerization in response to cold shock. Microtubule-associated protein involved in the stabilization of microtubules along the axis of migration during radial intercalation. Promotes the establishment and stabilization of an axis of microtubules required for the active migration of cells into the outer epithelium. Essential for ciliary central apparatus formation which requires both its microtubule-binding and bundling activities and for ciliary localization of HYDIN and SPAG6 in ependymal cilia. Binds actin in intestinal epithelial cells (IECs), essential for IECs survival and contributes to formation of filopodia and lamellipodia in migrating IECs. Regulates planar cell polarity signaling pathway and asymmetric microtubule accumulation in ciliated epithelia. The chain is Sperm flagellar protein 1 (Spef1) from Mus musculus (Mouse).